The chain runs to 436 residues: Serine hydroxymethyltransferase (436 aa).

Residues Leu133 and 137–139 (GHI) each bind (6S)-5,6,7,8-tetrahydrofolate. Lys242 bears the N6-(pyridoxal phosphate)lysine mark.

It belongs to the SHMT family. As to quaternary structure, homodimer. Pyridoxal 5'-phosphate serves as cofactor.

It localises to the cytoplasm. The enzyme catalyses (6R)-5,10-methylene-5,6,7,8-tetrahydrofolate + glycine + H2O = (6S)-5,6,7,8-tetrahydrofolate + L-serine. Its pathway is one-carbon metabolism; tetrahydrofolate interconversion. It functions in the pathway amino-acid biosynthesis; glycine biosynthesis; glycine from L-serine: step 1/1. Its function is as follows. Catalyzes the reversible interconversion of serine and glycine with tetrahydrofolate (THF) serving as the one-carbon carrier. This reaction serves as the major source of one-carbon groups required for the biosynthesis of purines, thymidylate, methionine, and other important biomolecules. Also exhibits THF-independent aldolase activity toward beta-hydroxyamino acids, producing glycine and aldehydes, via a retro-aldol mechanism. This Pelagibacter ubique (strain HTCC1062) protein is Serine hydroxymethyltransferase.